Consider the following 110-residue polypeptide: UPF0132 membrane protein MJ1443 (110 aa).

The next 3 membrane-spanning stretches (helical) occupy residues 15–35 (IEGALCYLFGVITGILFYILE), 49–69 (IILFGGLWVLSIILAFIPYGW), and 70–90 (MLSGLVNLAAFILWIVCMYKA).

Belongs to the UPF0132 family.

The protein localises to the cell membrane. The polypeptide is UPF0132 membrane protein MJ1443 (Methanocaldococcus jannaschii (strain ATCC 43067 / DSM 2661 / JAL-1 / JCM 10045 / NBRC 100440) (Methanococcus jannaschii)).